The primary structure comprises 302 residues: Lipoyl synthase (302 aa).

Positions 44, 49, 55, 70, 74, 77, and 283 each coordinate [4Fe-4S] cluster. In terms of domain architecture, Radical SAM core spans 56-272 (WSKKHATVMI…ARVAKSKGFL (217 aa)).

Belongs to the radical SAM superfamily. Lipoyl synthase family. [4Fe-4S] cluster serves as cofactor.

The protein localises to the cytoplasm. The catalysed reaction is [[Fe-S] cluster scaffold protein carrying a second [4Fe-4S](2+) cluster] + N(6)-octanoyl-L-lysyl-[protein] + 2 oxidized [2Fe-2S]-[ferredoxin] + 2 S-adenosyl-L-methionine + 4 H(+) = [[Fe-S] cluster scaffold protein] + N(6)-[(R)-dihydrolipoyl]-L-lysyl-[protein] + 4 Fe(3+) + 2 hydrogen sulfide + 2 5'-deoxyadenosine + 2 L-methionine + 2 reduced [2Fe-2S]-[ferredoxin]. The protein operates within protein modification; protein lipoylation via endogenous pathway; protein N(6)-(lipoyl)lysine from octanoyl-[acyl-carrier-protein]: step 2/2. Its function is as follows. Catalyzes the radical-mediated insertion of two sulfur atoms into the C-6 and C-8 positions of the octanoyl moiety bound to the lipoyl domains of lipoate-dependent enzymes, thereby converting the octanoylated domains into lipoylated derivatives. This Orientia tsutsugamushi (strain Ikeda) (Rickettsia tsutsugamushi) protein is Lipoyl synthase.